Here is a 130-residue protein sequence, read N- to C-terminus: ATP synthase epsilon chain (130 aa).

The protein belongs to the ATPase epsilon chain family. F-type ATPases have 2 components, CF(1) - the catalytic core - and CF(0) - the membrane proton channel. CF(1) has five subunits: alpha(3), beta(3), gamma(1), delta(1), epsilon(1). CF(0) has three main subunits: a, b and c.

The protein resides in the cell inner membrane. Its function is as follows. Produces ATP from ADP in the presence of a proton gradient across the membrane. This Pelagibacter ubique (strain HTCC1062) protein is ATP synthase epsilon chain.